We begin with the raw amino-acid sequence, 226 residues long: Octanoyltransferase (226 aa).

One can recognise a BPL/LPL catalytic domain in the interval 34 to 216 (GEANELVWLL…AWTEAFGPVR (183 aa)). Substrate is bound by residues 73 to 80 (RGGEYTYH), 145 to 147 (AIG), and 158 to 160 (GIA). The Acyl-thioester intermediate role is filled by Cys-176.

The protein belongs to the LipB family.

The protein resides in the cytoplasm. It carries out the reaction octanoyl-[ACP] + L-lysyl-[protein] = N(6)-octanoyl-L-lysyl-[protein] + holo-[ACP] + H(+). Its pathway is protein modification; protein lipoylation via endogenous pathway; protein N(6)-(lipoyl)lysine from octanoyl-[acyl-carrier-protein]: step 1/2. Functionally, catalyzes the transfer of endogenously produced octanoic acid from octanoyl-acyl-carrier-protein onto the lipoyl domains of lipoate-dependent enzymes. Lipoyl-ACP can also act as a substrate although octanoyl-ACP is likely to be the physiological substrate. This is Octanoyltransferase from Maricaulis maris (strain MCS10) (Caulobacter maris).